Consider the following 128-residue polypeptide: Fluoride-specific ion channel FluC (128 aa).

4 consecutive transmembrane segments (helical) span residues 7–27 (LAIG…AGLV), 37–57 (FGTL…IGAI), 73–93 (TGMM…FFLF), and 96–116 (ALYI…IILA). Residues glycine 77 and threonine 80 each contribute to the Na(+) site.

It belongs to the fluoride channel Fluc/FEX (TC 1.A.43) family.

The protein resides in the cell inner membrane. The catalysed reaction is fluoride(in) = fluoride(out). With respect to regulation, na(+) is not transported, but it plays an essential structural role and its presence is essential for fluoride channel function. In terms of biological role, fluoride-specific ion channel. Important for reducing fluoride concentration in the cell, thus reducing its toxicity. The sequence is that of Fluoride-specific ion channel FluC from Nautilia profundicola (strain ATCC BAA-1463 / DSM 18972 / AmH).